The sequence spans 200 residues: NAD(P)H dehydrogenase (quinone) (200 aa).

In terms of domain architecture, Flavodoxin-like spans 4-191 (VLVLYYSSYG…DIARYQGKHV (188 aa)). Residues 10-15 (SSYGHV) and 79-81 (TRF) contribute to the FMN site. Tyr12 is an NAD(+) binding site. Trp99 serves as a coordination point for substrate. FMN contacts are provided by residues 114–120 (STGTQHG) and His135.

This sequence belongs to the WrbA family. FMN serves as cofactor.

The enzyme catalyses a quinone + NADH + H(+) = a quinol + NAD(+). It catalyses the reaction a quinone + NADPH + H(+) = a quinol + NADP(+). The polypeptide is NAD(P)H dehydrogenase (quinone) (Burkholderia ambifaria (strain MC40-6)).